Here is a 66-residue protein sequence, read N- to C-terminus: Large ribosomal subunit protein bL35 (66 aa).

Composition is skewed to basic residues over residues 1–16 (MPKQ…RVKR) and 23–45 (KRGR…RQLR). A disordered region spans residues 1-53 (MPKQKTHRGLAKRVKRTGGGGLKRGRAFTSHRFHGKTKKQRRQLRKASMVAKG).

Belongs to the bacterial ribosomal protein bL35 family.

In Enterococcus faecalis (strain ATCC 700802 / V583), this protein is Large ribosomal subunit protein bL35.